Here is a 620-residue protein sequence, read N- to C-terminus: Chaperone protein HscA homolog (620 aa).

It belongs to the heat shock protein 70 family.

Its function is as follows. Chaperone involved in the maturation of iron-sulfur cluster-containing proteins. Has a low intrinsic ATPase activity which is markedly stimulated by HscB. This Pseudomonas savastanoi pv. phaseolicola (strain 1448A / Race 6) (Pseudomonas syringae pv. phaseolicola (strain 1448A / Race 6)) protein is Chaperone protein HscA homolog.